Reading from the N-terminus, the 350-residue chain is Biotin synthase (350 aa).

Residues 38–256 (NHVQVSTLLS…IAVARIMMPE (219 aa)) form the Radical SAM core domain. Residues cysteine 53, cysteine 57, and cysteine 60 each contribute to the [4Fe-4S] cluster site. The [2Fe-2S] cluster site is built by cysteine 97, cysteine 128, cysteine 188, and arginine 260.

This sequence belongs to the radical SAM superfamily. Biotin synthase family. Homodimer. Requires [4Fe-4S] cluster as cofactor. The cofactor is [2Fe-2S] cluster.

The catalysed reaction is (4R,5S)-dethiobiotin + (sulfur carrier)-SH + 2 reduced [2Fe-2S]-[ferredoxin] + 2 S-adenosyl-L-methionine = (sulfur carrier)-H + biotin + 2 5'-deoxyadenosine + 2 L-methionine + 2 oxidized [2Fe-2S]-[ferredoxin]. The protein operates within cofactor biosynthesis; biotin biosynthesis; biotin from 7,8-diaminononanoate: step 2/2. Catalyzes the conversion of dethiobiotin (DTB) to biotin by the insertion of a sulfur atom into dethiobiotin via a radical-based mechanism. In Aliivibrio fischeri (strain MJ11) (Vibrio fischeri), this protein is Biotin synthase.